The primary structure comprises 178 residues: ATP synthase subunit delta (178 aa).

Belongs to the ATPase delta chain family. In terms of assembly, F-type ATPases have 2 components, F(1) - the catalytic core - and F(0) - the membrane proton channel. F(1) has five subunits: alpha(3), beta(3), gamma(1), delta(1), epsilon(1). F(0) has three main subunits: a(1), b(2) and c(10-14). The alpha and beta chains form an alternating ring which encloses part of the gamma chain. F(1) is attached to F(0) by a central stalk formed by the gamma and epsilon chains, while a peripheral stalk is formed by the delta and b chains.

It is found in the cell membrane. Its function is as follows. F(1)F(0) ATP synthase produces ATP from ADP in the presence of a proton or sodium gradient. F-type ATPases consist of two structural domains, F(1) containing the extramembraneous catalytic core and F(0) containing the membrane proton channel, linked together by a central stalk and a peripheral stalk. During catalysis, ATP synthesis in the catalytic domain of F(1) is coupled via a rotary mechanism of the central stalk subunits to proton translocation. In terms of biological role, this protein is part of the stalk that links CF(0) to CF(1). It either transmits conformational changes from CF(0) to CF(1) or is implicated in proton conduction. This chain is ATP synthase subunit delta, found in Acetivibrio thermocellus (strain ATCC 27405 / DSM 1237 / JCM 9322 / NBRC 103400 / NCIMB 10682 / NRRL B-4536 / VPI 7372) (Clostridium thermocellum).